Here is a 509-residue protein sequence, read N- to C-terminus: ATP synthase subunit alpha (509 aa).

169–176 (GDRQTGKT) is a binding site for ATP.

Belongs to the ATPase alpha/beta chains family. F-type ATPases have 2 components, CF(1) - the catalytic core - and CF(0) - the membrane proton channel. CF(1) has five subunits: alpha(3), beta(3), gamma(1), delta(1), epsilon(1). CF(0) has three main subunits: a(1), b(2) and c(9-12). The alpha and beta chains form an alternating ring which encloses part of the gamma chain. CF(1) is attached to CF(0) by a central stalk formed by the gamma and epsilon chains, while a peripheral stalk is formed by the delta and b chains.

It is found in the cell inner membrane. It carries out the reaction ATP + H2O + 4 H(+)(in) = ADP + phosphate + 5 H(+)(out). In terms of biological role, produces ATP from ADP in the presence of a proton gradient across the membrane. The alpha chain is a regulatory subunit. This is ATP synthase subunit alpha from Brucella ovis (strain ATCC 25840 / 63/290 / NCTC 10512).